The primary structure comprises 547 residues: Nuclear speckle splicing regulatory protein 1 (547 aa).

The segment at 25-51 (KPSVFGNDSDDDEASVSESLQREAAKK) is disordered. Phosphoserine occurs at positions 27 and 33. Residues 103-177 (IHNLLKAVEI…EARLDVTKQK (75 aa)) adopt a coiled-coil conformation. Residues 105-169 (NLLKAVEIRK…REKRAAALEA (65 aa)) form a necessary for alternative splicing activity region. The tract at residues 188–523 (NQAVGEEAVP…KRSNEETVMS (336 aa)) is disordered. Residues lysine 198 and lysine 209 each participate in a glycyl lysine isopeptide (Lys-Gly) (interchain with G-Cter in SUMO2) cross-link. Positions 200-217 (SFREARTVIKEEKLRGYP) are enriched in basic and acidic residues. Positions 223–232 (ENRPQQNCAL) are enriched in polar residues. Positions 237–254 (EEAEENPDADSDSEESCD) are enriched in acidic residues. A phosphoserine mark is found at serine 247 and serine 252. Residues 255 to 269 (DGERGDHKVKSRGEE) show a composition bias toward basic and acidic residues. Lysine 276 is modified (N6-acetyllysine). A compositionally biased stretch (basic residues) spans 277–287 (YLKHHKNHTHS). Residue lysine 279 forms a Glycyl lysine isopeptide (Lys-Gly) (interchain with G-Cter in SUMO2) linkage. Residues 308-339 (RGHEHKGGQHQDRQSRDQESCHKDRSHREEKS) show a composition bias toward basic and acidic residues. Positions 340–355 (SHRHREASHKDHHWKR) are enriched in basic residues. Composition is skewed to basic and acidic residues over residues 356–480 (HEHE…KPPR) and 490–506 (RLTE…ERPP). A coiled-coil region spans residues 376–417 (KREKYSSREQEKDRQWNDHDRYSEKEKKGKEKEEHRKARRER). Phosphoserine is present on serine 447.

The protein belongs to the NSRP1 family. As to quaternary structure, interacts (via C-terminus) with SRSF1. Interacts (via C-terminus) with SRSF2.

It is found in the nucleus. Its subcellular location is the nucleus speckle. Functionally, RNA-binding protein that mediates pre-mRNA alternative splicing regulation. The chain is Nuclear speckle splicing regulatory protein 1 (Nsrp1) from Rattus norvegicus (Rat).